The primary structure comprises 404 residues: GID complex subunit 9 (404 aa).

The region spanning 116 to 148 is the LisH domain; the sequence is SRVRLNRLVADYMMANGYHGAAALLCKDSQLEN. The CTLH domain maps to 154–211; sequence IYKRYQLIHDSILQQELKEVLSWCSEHRAILKKNNSTLELEVRLQRFIELIKSKKLCQ. The segment at 317 to 389 adopts an RING-Gid-type zinc-finger fold; the sequence is CPVCTPCLND…REGFLRDPYS (73 aa).

This sequence belongs to the FYV10 family. Identified in the GID/CTLH complex. In the absence of stress, the complex exists as an inactive anticipatory complex (GID(Ant)), composed of Gid1, the E3 ubiquitin-ligase Gid2, Gid5, Gid8, and the RING-like subunit Gid9, awaiting a substrate receptor to form the active E3 ligase complex. When cells are shifted to glucose-containing medium, the substrate receptor Gid4 is induced and becomes part of the complex, named GID(SR4). Additionally, Gid7 transforms the GID(SR4) E3 ligase core into a higher-order supramolecular assembly (Chelator-GID(SR4)). Under osmotic or heat stress, the substrate receptor Gid10 is induced and becomes part of the complex, named GID(SR10).

It localises to the cytoplasm. The protein resides in the nucleus. The catalysed reaction is S-ubiquitinyl-[E2 ubiquitin-conjugating enzyme]-L-cysteine + [acceptor protein]-L-lysine = [E2 ubiquitin-conjugating enzyme]-L-cysteine + N(6)-ubiquitinyl-[acceptor protein]-L-lysine.. It functions in the pathway protein modification; protein ubiquitination. Its function is as follows. Component of the GID E3 ligase complex recruiting N termini and catalyzing ubiquitination of proteins targeted for degradation. GID E3 is regulated through assembly with interchangeable N-degron-binding substrate receptors induced by distinct environmental perturbations. Required for the adaptation to the presence of glucose in the growth medium; mediates in association with the substrate receptor VID24/GID4 the degradation of enzymes involved in gluconeogenesis when cells are shifted to glucose-containing medium. The protein is GID complex subunit 9 (gid9) of Schizosaccharomyces pombe (strain 972 / ATCC 24843) (Fission yeast).